We begin with the raw amino-acid sequence, 198 residues long: Mitrocomin (198 aa).

A propeptide spanning residues 1–8 (MSMGSRYA) is cleaved from the precursor. EF-hand domains follow at residues 19 to 54 (KWIA…IICK), 118 to 147 (DALF…AGIQ), and 148 to 183 (QSRG…FWYS). Positions 32, 34, 36, 38, 43, 125, 127, 129, 131, 136, 161, 163, 165, 167, and 172 each coordinate Ca(2+).

Belongs to the aequorin family.

Its function is as follows. Ca(2+)-dependent bioluminescence photoprotein. Displays an emission peak at 470 nm (blue light). Trace amounts of calcium ion trigger the intramolecular oxidation of the chromophore, coelenterazine into coelenteramide and CO(2) with the concomitant emission of light. This Mitrocoma cellularia (Cross jellyfish) protein is Mitrocomin (MI17).